Consider the following 452-residue polypeptide: Matrilin-3 (452 aa).

Residues 1–24 form the signal peptide; that stretch reads MRRALGTLGCCLALLLPLLPAARG. The region spanning 54-229 is the VWFA domain; it reads DLVFIIDSSR…GVIEKLTSKF (176 aa). 4 EGF-like domains span residues 235–275, 276–316, 317–357, and 358–398; these read AANT…RTCS, AVDV…KTCS, and AMDV…KTCS. 12 cysteine pairs are disulfide-bonded: Cys-239–Cys-250, Cys-246–Cys-259, Cys-261–Cys-274, Cys-280–Cys-291, Cys-287–Cys-300, Cys-302–Cys-315, Cys-321–Cys-332, Cys-328–Cys-341, Cys-343–Cys-356, Cys-362–Cys-373, Cys-369–Cys-382, and Cys-384–Cys-397. A glycan (N-linked (GlcNAc...) asparagine) is linked at Asn-295. A coiled-coil region spans residues 419 to 451; sequence ALQDSVTSRLEALSTKLDEVSQKLQAYQDRQQV.

In terms of assembly, can form homooligomers (monomers, dimers, trimers and tetramers) and heterooligomers with matrilin-1. Expression is restricted to cartilaginous tissues.

Its subcellular location is the secreted. Its function is as follows. Major component of the extracellular matrix of cartilage and may play a role in the formation of extracellular filamentous networks. This Gallus gallus (Chicken) protein is Matrilin-3 (MATN3).